Reading from the N-terminus, the 363-residue chain is Aspartate carbamoyltransferase, chloroplastic (363 aa).

A disordered region spans residues 1 to 21 (MAAARATLPLPRVPAPSPRPQ). A chloroplast-targeting transit peptide spans 1–36 (MAAARATLPLPRVPAPSPRPQLRPFPSLPARRGAVA). Over residues 11–21 (PRVPAPSPRPQ) the composition is skewed to pro residues. Arg-109 and Thr-110 together coordinate carbamoyl phosphate. UMP contacts are provided by Arg-109 and Thr-110. Residue Lys-139 coordinates L-aspartate. Positions 160, 188, and 191 each coordinate carbamoyl phosphate. Arg-160 and His-188 together coordinate UMP. UMP is bound by residues Arg-221 and Arg-283. L-aspartate-binding residues include Arg-221 and Arg-283. Carbamoyl phosphate contacts are provided by Leu-323 and Pro-324.

Belongs to the aspartate/ornithine carbamoyltransferase superfamily. ATCase family. As to quaternary structure, homotrimer.

Its subcellular location is the plastid. It is found in the chloroplast. It carries out the reaction carbamoyl phosphate + L-aspartate = N-carbamoyl-L-aspartate + phosphate + H(+). It participates in pyrimidine metabolism; UMP biosynthesis via de novo pathway; (S)-dihydroorotate from bicarbonate: step 2/3. Its activity is regulated as follows. Feedback inhibited by UMP. Catalyzes the condensation of carbamoyl phosphate and aspartate to form carbamoyl aspartate and inorganic phosphate, the committed step in the de novo pyrimidine nucleotide biosynthesis pathway. In Oryza sativa subsp. japonica (Rice), this protein is Aspartate carbamoyltransferase, chloroplastic (PYRB).